The following is a 188-amino-acid chain: NAD(P)H-quinone oxidoreductase subunit 6, chloroplastic (188 aa).

5 helical membrane passes run 10-30, 32-52, 61-81, 97-117, and 153-173; these read GILL…ILLN, IVQS…LYLV, AQVL…VMLI, GNNI…SIIL, and FLLP…GAIT.

Belongs to the complex I subunit 6 family. NDH is composed of at least 16 different subunits, 5 of which are encoded in the nucleus.

It localises to the plastid. The protein localises to the chloroplast thylakoid membrane. The catalysed reaction is a plastoquinone + NADH + (n+1) H(+)(in) = a plastoquinol + NAD(+) + n H(+)(out). The enzyme catalyses a plastoquinone + NADPH + (n+1) H(+)(in) = a plastoquinol + NADP(+) + n H(+)(out). NDH shuttles electrons from NAD(P)H:plastoquinone, via FMN and iron-sulfur (Fe-S) centers, to quinones in the photosynthetic chain and possibly in a chloroplast respiratory chain. The immediate electron acceptor for the enzyme in this species is believed to be plastoquinone. Couples the redox reaction to proton translocation, and thus conserves the redox energy in a proton gradient. This chain is NAD(P)H-quinone oxidoreductase subunit 6, chloroplastic (ndhG), found in Psilotum nudum (Whisk fern).